The sequence spans 299 residues: Glycine--tRNA ligase alpha subunit (299 aa).

Belongs to the class-II aminoacyl-tRNA synthetase family. Tetramer of two alpha and two beta subunits.

The protein resides in the cytoplasm. The enzyme catalyses tRNA(Gly) + glycine + ATP = glycyl-tRNA(Gly) + AMP + diphosphate. This Dictyoglomus thermophilum (strain ATCC 35947 / DSM 3960 / H-6-12) protein is Glycine--tRNA ligase alpha subunit.